Here is a 212-residue protein sequence, read N- to C-terminus: Large ribosomal subunit protein bL25 (212 aa).

Basic and acidic residues predominate over residues 1–16 (MKTRIDLTVEPRETGK). The disordered stretch occupies residues 1-22 (MKTRIDLTVEPRETGKHNSRGL).

It belongs to the bacterial ribosomal protein bL25 family. CTC subfamily. As to quaternary structure, part of the 50S ribosomal subunit; part of the 5S rRNA/L5/L18/L25 subcomplex. Contacts the 5S rRNA. Binds to the 5S rRNA independently of L5 and L18.

This is one of the proteins that binds to the 5S RNA in the ribosome where it forms part of the central protuberance. This Bdellovibrio bacteriovorus (strain ATCC 15356 / DSM 50701 / NCIMB 9529 / HD100) protein is Large ribosomal subunit protein bL25.